Consider the following 901-residue polypeptide: Cyanophycin synthetase (901 aa).

An ATP-grasp domain is found at 224–478 (KRILAASGVP…VAGAVMDMLF (255 aa)). 493–499 (GTNGKTT) is an ATP binding site.

It in the C-terminal section; belongs to the MurCDEF family. As to quaternary structure, homodimer.

The catalysed reaction is [L-4-(L-arginin-2-N-yl)aspartate](n) + L-aspartate + ATP = [L-4-(L-arginin-2-N-yl)aspartate](n)-L-aspartate + ADP + phosphate + H(+). The enzyme catalyses [L-4-(L-arginin-2-N-yl)aspartate](n)-L-aspartate + L-arginine + ATP = [L-4-(L-arginin-2-N-yl)aspartate](n+1) + ADP + phosphate + H(+). In terms of biological role, catalyzes the ATP-dependent polymerization of arginine and aspartate to multi-L-arginyl-poly-L-aspartic acid (cyanophycin; a water-insoluble reserve polymer). This is Cyanophycin synthetase (cphA) from Nostoc sp. (strain PCC 7120 / SAG 25.82 / UTEX 2576).